Here is a 187-residue protein sequence, read N- to C-terminus: Ribosome-recycling factor (187 aa).

It belongs to the RRF family.

Its subcellular location is the cytoplasm. In terms of biological role, responsible for the release of ribosomes from messenger RNA at the termination of protein biosynthesis. May increase the efficiency of translation by recycling ribosomes from one round of translation to another. This chain is Ribosome-recycling factor, found in Rhodopseudomonas palustris (strain HaA2).